The primary structure comprises 466 residues: MLHLDYTFNVSDATSTSSIIIVSRRELANLRIMVIIASAISIVFSLIAIFWRWSRRRTIREQFHIALFSVLFIRSIVQMIHPCLALSDPFFWAPKHRCFTIGFFLLVLVRMTDYWIFINILHNALLVLFPHVDTERRGLYRFRHTVFTLSFVIPLTIGGLAFTNKRNTFVNLQTRCYLPYTPVRFMFGLNWSFDYALSIAIIALQTCMFISIRRKIKRFKKYSHQQTNVFDTLNVIDSYPTAPDQVALPPFPDTNSTLTYTPSNSQSIYSSQSQPSPYSRPLLSSVHPNLPPGSQSTPANLNQSGIHFEQDFRDSPNRTNGLEDHTSFKLSSPLTSDEDGASSVLAAYGNDMQDDPLLKQRKRILSQSKFLFAYPAIFIFMWILPQIQIIVILAQPLHCSGSCKRFAFVAVFADNFVAIFIALSDFIWICYRGYTYLKERDSSKSYWDQIKELTLKWWRGKFGEEK.

A run of 5 helical transmembrane segments spans residues 30-50 (LRIM…IAIF), 65-85 (IALF…PCLA), 101-121 (IGFF…INIL), 144-164 (HTVF…AFTN), and 192-212 (SFDY…FISI). Residues 262–285 (PSNSQSIYSSQSQPSPYSRPLLSS) are compositionally biased toward low complexity. The interval 262–337 (PSNSQSIYSS…FKLSSPLTSD (76 aa)) is disordered. Over residues 292-305 (PGSQSTPANLNQSG) the composition is skewed to polar residues. Basic and acidic residues predominate over residues 308–327 (FEQDFRDSPNRTNGLEDHTS). Transmembrane regions (helical) follow at residues 372–392 (FAYP…IIVI) and 409–429 (VAVF…FIWI).

Belongs to the G-protein coupled receptor GPR1/git3 family. In terms of assembly, interacts with G protein alpha subunit gpa2; the interaction is direct and leads to activation of gpa2 upon glucose stimulation.

It localises to the membrane. G protein-coupled receptor (GPCR) that senses glucose and signals via the heterotrimeric G protein alpha subunit gpa2 to activate adenylate cyclase and PKA signaling, and suppress sexual development and gluconeogenesis. In Schizosaccharomyces pombe (strain 972 / ATCC 24843) (Fission yeast), this protein is Glucose receptor protein git3 (git3).